We begin with the raw amino-acid sequence, 92 residues long: Large ribosomal subunit protein bL28 (92 aa).

Belongs to the bacterial ribosomal protein bL28 family.

This is Large ribosomal subunit protein bL28 from Borreliella burgdorferi (strain ATCC 35210 / DSM 4680 / CIP 102532 / B31) (Borrelia burgdorferi).